The sequence spans 267 residues: Non-homologous end joining protein Ku (267 aa).

The 185-residue stretch at 11 to 195 folds into the Ku domain; it reads AVGQVSCAVA…KVKGEMLELA (185 aa). The tract at residues 229–267 is disordered; that stretch reads GRKPKRKAAPKKAREPSDLMAALRESVAATERPRRRKAG.

Belongs to the prokaryotic Ku family. Homodimer. Interacts with LigD.

With LigD forms a non-homologous end joining (NHEJ) DNA repair enzyme, which repairs dsDNA breaks with reduced fidelity. Binds linear dsDNA with 5'- and 3'- overhangs but not closed circular dsDNA nor ssDNA. Recruits and stimulates the ligase activity of LigD. This is Non-homologous end joining protein Ku from Cereibacter sphaeroides (strain KD131 / KCTC 12085) (Rhodobacter sphaeroides).